The primary structure comprises 213 residues: MNLLIMGLPGAGKGTQAAKIVETFELIHISTGDMFRAAMANQTEMGVLAKSYIDKGDLVPDEVTNGIVKERLAQADIKEKGFLLDGYPRTIEQAHALDETLKALGLTLDGVINIEVDPASLIDRLSGRIINKKTGETFHKIFNPPVGDYKEEDFYQREDDKPETVKRRLDVNIAQGEPIIKHYRQAGIVRDIDGNKDISEVFADIKKVIENLK.

Residue 10-15 coordinates ATP; it reads GAGKGT. The interval 30 to 59 is NMP; sequence STGDMFRAAMANQTEMGVLAKSYIDKGDLV. Residues Thr31, Arg36, 57-59, 86-89, and Gln93 each bind AMP; these read DLV and GYPR. The segment at 127-160 is LID; sequence GRIINKKTGETFHKIFNPPVGDYKEEDFYQREDD. ATP-binding positions include Arg128 and 137 to 138; that span reads TF. Residues Arg157 and Arg168 each contribute to the AMP site. Residue Lys196 coordinates ATP.

Belongs to the adenylate kinase family. As to quaternary structure, monomer.

It is found in the cytoplasm. The enzyme catalyses AMP + ATP = 2 ADP. Its pathway is purine metabolism; AMP biosynthesis via salvage pathway; AMP from ADP: step 1/1. Catalyzes the reversible transfer of the terminal phosphate group between ATP and AMP. Plays an important role in cellular energy homeostasis and in adenine nucleotide metabolism. The sequence is that of Adenylate kinase from Streptococcus equi subsp. equi (strain 4047).